The primary structure comprises 196 residues: Calcineurin B homologous protein 2 (196 aa).

The N-myristoyl glycine moiety is linked to residue Gly2. EF-hand domains are found at residues 26–61, 71–106, 111–146, and 152–187; these read ASLL…AVNP, FPNG…PKQP, SRMN…MVGV, and QLES…MNIE. Ser27 is subject to Phosphoserine. Ca(2+)-binding residues include Asp124, Asp126, Asp128, Lys130, and Glu135. The Nuclear export signal signature appears at 137-148; the sequence is LQVLRLMVGVQV. Ca(2+) is bound by residues Asp165, Asp167, Asp169, and Glu176.

It belongs to the calcineurin regulatory subunit family. CHP subfamily. In terms of assembly, interacts with PPP3CA. Interacts with SLC9A1/NHE1; the interaction occurs in a calcium-dependent manner. Interacts with SLC9A1/NHE1.

The protein resides in the cytoplasm. It localises to the nucleus. It is found in the cell membrane. In terms of biological role, functions as an integral cofactor in cell pH regulation by controlling plasma membrane-type Na(+)/H(+) exchange activity. Binds to and activates SLC9A1/NHE1 in a serum-independent manner, thus increasing pH and protecting cells from serum deprivation-induced death. Also plays a role in the regulation of cell proliferation and tumor growth by increasing the phosphatase activity of PPP3CA in a calcium-dependent manner. Activator of the calcineurin/NFAT signaling pathway. Involved in the cytoplasmic translocation of the transcription factor NFATC3 to the nucleus. In Mus musculus (Mouse), this protein is Calcineurin B homologous protein 2 (Chp2).